Reading from the N-terminus, the 1091-residue chain is Sodium/potassium exporting P-type ATPase 5 (1091 aa).

Over 1–63 (MSEGTVKENN…LGDDTKIDYK (63 aa)) the chain is Cytoplasmic. Residues 64-84 (AMVLHQVCNAMIMVLVISMAI) traverse the membrane as a helical segment. Residues 85–90 (SFAVRD) are Extracellular-facing. Residues 91–111 (WITGGVISFVIAVNVLIGLVQ) form a helical membrane-spanning segment. Over 112-282 (EYKATKTMNS…TNVGTPLHRK (171 aa)) the chain is Cytoplasmic. A helical membrane pass occupies residues 283–303 (LSKLAVLLFWIAVLFAIIVMA). Residues 304 to 312 (SQKFDVDKR) lie on the Extracellular side of the membrane. Residues 313–333 (VAIYAICVALSMIPSSLVVVL) traverse the membrane as a helical segment. At 334 to 815 (TITMSVGAAV…RRMTDNIQKF (482 aa)) the chain is on the cytoplasmic side. The active-site 4-aspartylphosphate intermediate is the Asp369. Mg(2+)-binding residues include Asp369 and Thr371. Residues Thr371 and Glu483 each contribute to the ATP site. Positions 499-525 (ALTGEKSTNQSNENDQSSLSQHNEKPG) are disordered. Residues 503-519 (EKSTNQSNENDQSSLSQ) are compositionally biased toward polar residues. The ATP site is built by Lys561, Arg606, Thr673, Gly674, Asp675, Arg732, and Lys738. Position 757 (Asp757) interacts with Mg(2+). Asn760 is a binding site for ATP. Residues 816 to 836 (VLQLLAENVAQALYLIIGLVF) traverse the membrane as a helical segment. Topologically, residues 837–848 (RDENGKSVFPLS) are extracellular. Residues 849–869 (PVEVLWIIVVTSCFPAMGLGL) traverse the membrane as a helical segment. At 870-885 (EKAAPDLMDRPPNDSE) the chain is on the cytoplasmic side. A helical transmembrane segment spans residues 886-906 (VGIFTWEVIIDTFAYGIIMTG). The Extracellular segment spans residues 907 to 943 (SCMASFTGSLYGINSGRLGHDCDGTYNSSCRDVYRSR). The helical transmembrane segment at 944–964 (SAAFATMTWCALILAWEVVDM) threads the bilayer. Residues 965–991 (RRSFFRMHPDTDSPVKEFFRSIWGNQF) are Cytoplasmic-facing. A helical membrane pass occupies residues 992–1012 (LFWSIIFGFVSAFPVVYIPVI). At 1013–1021 (NDKVFLHKP) the chain is on the extracellular side. Residues 1022-1042 (IGAEWGLAIAFTIAFWIGAEL) traverse the membrane as a helical segment. The Cytoplasmic segment spans residues 1043–1091 (YKCGKRRYFKTQRAHNSENDLERSSKHDPFEAYSTSTTLQSEINISVKH).

The protein belongs to the cation transport ATPase (P-type) (TC 3.A.3) family. Type IID subfamily. Requires Mg(2+) as cofactor. The active site is phosphorylated in presence of sodium or potassium and in conditions of higher pH. Not phosphorylated in presence of calcium ions.

The protein resides in the cell membrane. It carries out the reaction Na(+)(in) + ATP + H2O = Na(+)(out) + ADP + phosphate + H(+). It catalyses the reaction K(+)(in) + ATP + H2O = K(+)(out) + ADP + phosphate + H(+). Functionally, catalyzes the hydrolysis of ATP coupled with the export of sodium and potassium from the cell. May export potassium less efficiently. May transport other cations such as lithium. Sodium/potassium efflux ATPases are involved in salt tolerance and maintaining the membrane potential across the plasma membrane in high salinity (Na+) or alkaline (K+) environments. This Saccharomyces cerevisiae (strain ATCC 204508 / S288c) (Baker's yeast) protein is Sodium/potassium exporting P-type ATPase 5.